A 223-amino-acid chain; its full sequence is Ribosomal RNA small subunit methyltransferase G (223 aa).

Residues Gly82, Leu87, 133-134 (AE), and Arg151 each bind S-adenosyl-L-methionine.

Belongs to the methyltransferase superfamily. RNA methyltransferase RsmG family.

It is found in the cytoplasm. In terms of biological role, specifically methylates the N7 position of guanine in position 518 of 16S rRNA. The protein is Ribosomal RNA small subunit methyltransferase G of Corynebacterium glutamicum (strain R).